Here is a 127-residue protein sequence, read N- to C-terminus: Fluoride-specific ion channel FluC (127 aa).

Transmembrane regions (helical) follow at residues 4-24 (SLLA…GLGM), 35-55 (PGTL…IAFF), 68-88 (LLIT…AEVV), and 96-116 (ILWA…MTAA). Gly75 and Thr78 together coordinate Na(+).

This sequence belongs to the fluoride channel Fluc/FEX (TC 1.A.43) family.

Its subcellular location is the cell inner membrane. The enzyme catalyses fluoride(in) = fluoride(out). Its activity is regulated as follows. Na(+) is not transported, but it plays an essential structural role and its presence is essential for fluoride channel function. In terms of biological role, fluoride-specific ion channel. Important for reducing fluoride concentration in the cell, thus reducing its toxicity. This chain is Fluoride-specific ion channel FluC, found in Pseudomonas putida (strain W619).